The chain runs to 331 residues: UDP-N-acetylenolpyruvoylglucosamine reductase (331 aa).

Positions 54–221 constitute an FAD-binding PCMH-type domain; the sequence is RVGGAAELYV…TQATFQLQPG (168 aa). R200 is an active-site residue. S251 (proton donor) is an active-site residue. E321 is an active-site residue.

This sequence belongs to the MurB family. It depends on FAD as a cofactor.

The protein localises to the cytoplasm. The enzyme catalyses UDP-N-acetyl-alpha-D-muramate + NADP(+) = UDP-N-acetyl-3-O-(1-carboxyvinyl)-alpha-D-glucosamine + NADPH + H(+). The protein operates within cell wall biogenesis; peptidoglycan biosynthesis. Cell wall formation. In Nostoc sp. (strain PCC 7120 / SAG 25.82 / UTEX 2576), this protein is UDP-N-acetylenolpyruvoylglucosamine reductase.